Here is a 150-residue protein sequence, read N- to C-terminus: D-aminoacyl-tRNA deacylase (150 aa).

A Gly-cisPro motif, important for rejection of L-amino acids motif is present at residues 137 to 138; that stretch reads GP.

Belongs to the DTD family. In terms of assembly, homodimer.

The protein resides in the cytoplasm. It carries out the reaction glycyl-tRNA(Ala) + H2O = tRNA(Ala) + glycine + H(+). It catalyses the reaction a D-aminoacyl-tRNA + H2O = a tRNA + a D-alpha-amino acid + H(+). An aminoacyl-tRNA editing enzyme that deacylates mischarged D-aminoacyl-tRNAs. Also deacylates mischarged glycyl-tRNA(Ala), protecting cells against glycine mischarging by AlaRS. Acts via tRNA-based rather than protein-based catalysis; rejects L-amino acids rather than detecting D-amino acids in the active site. By recycling D-aminoacyl-tRNA to D-amino acids and free tRNA molecules, this enzyme counteracts the toxicity associated with the formation of D-aminoacyl-tRNA entities in vivo and helps enforce protein L-homochirality. This is D-aminoacyl-tRNA deacylase from Geotalea daltonii (strain DSM 22248 / JCM 15807 / FRC-32) (Geobacter daltonii).